The following is a 712-amino-acid chain: Ribosomal RNA large subunit methyltransferase K/L (712 aa).

The region spanning 46 to 157 is the THUMP domain; it reads GAYQALLHSR…RENMVVSLDL (112 aa).

Belongs to the methyltransferase superfamily. RlmKL family.

The protein localises to the cytoplasm. It carries out the reaction guanosine(2445) in 23S rRNA + S-adenosyl-L-methionine = N(2)-methylguanosine(2445) in 23S rRNA + S-adenosyl-L-homocysteine + H(+). The enzyme catalyses guanosine(2069) in 23S rRNA + S-adenosyl-L-methionine = N(2)-methylguanosine(2069) in 23S rRNA + S-adenosyl-L-homocysteine + H(+). In terms of biological role, specifically methylates the guanine in position 2445 (m2G2445) and the guanine in position 2069 (m7G2069) of 23S rRNA. In Actinobacillus pleuropneumoniae serotype 7 (strain AP76), this protein is Ribosomal RNA large subunit methyltransferase K/L.